Here is a 209-residue protein sequence, read N- to C-terminus: Mitochondrial import inner membrane translocase subunit Tim23 (209 aa).

A run of 3 helical transmembrane segments spans residues 73–93 (FELA…FGAL), 125–145 (ALWA…GVIV), and 180–200 (GGLA…WEHI).

Belongs to the Tim17/Tim22/Tim23 family. In terms of assembly, component of the TIM23 complex at least composed of timm23, timm17 and timm50. The complex interacts with the timm44 component of the PAM complex.

The protein localises to the mitochondrion inner membrane. In terms of biological role, essential component of the TIM23 complex, a complex that mediates the translocation of transit peptide-containing proteins across the mitochondrial inner membrane. The protein is Mitochondrial import inner membrane translocase subunit Tim23 (timm23) of Xenopus laevis (African clawed frog).